A 382-amino-acid chain; its full sequence is Probable cytosolic iron-sulfur protein assembly protein 1 (382 aa).

WD repeat units follow at residues 9–48 (AHHD…KFPR), 55–107 (THTR…DNDE), 138–178 (GHEH…EEFE), 185–224 (EHQQ…DDWG), 231–278 (GHQG…SETN), 303–342 (AHTY…WEIE), and 349–382 (HGVH…NVWE).

It belongs to the WD repeat CIA1 family. As to quaternary structure, interacts with NAR1.

The protein localises to the cytoplasm. It localises to the nucleus. Functionally, essential component of the cytosolic iron-sulfur (Fe/S) protein assembly machinery. Required for the maturation of extramitochondrial Fe/S proteins. The polypeptide is Probable cytosolic iron-sulfur protein assembly protein 1 (Meyerozyma guilliermondii (strain ATCC 6260 / CBS 566 / DSM 6381 / JCM 1539 / NBRC 10279 / NRRL Y-324) (Yeast)).